Consider the following 362-residue polypeptide: Serine/threonine-protein phosphatase 2A activator 1 (362 aa).

A compositionally biased stretch (pro residues) spans 1–10; it reads MQPHTQPPQP. 2 disordered regions span residues 1–28 and 339–362; these read MQPH…APPR and NVEE…PWAR. Basic and acidic residues predominate over residues 340–351; it reads VEERGDKNEGKG.

The protein belongs to the PTPA-type PPIase family.

It is found in the cytoplasm. Its subcellular location is the nucleus. The catalysed reaction is [protein]-peptidylproline (omega=180) = [protein]-peptidylproline (omega=0). Functionally, PPIases accelerate the folding of proteins. It catalyzes the cis-trans isomerization of proline imidic peptide bonds in oligopeptides. Acts as a regulatory subunit for PP2A-like phosphatases modulating their activity or substrate specificity, probably by inducing a conformational change in the catalytic subunit, a direct target of the PPIase. Can reactivate inactive phosphatase PP2A-phosphatase methylesterase complexes (PP2Ai) in presence of ATP and Mg(2+) by dissociating the inactive form from the complex. This Cryptococcus neoformans var. neoformans serotype D (strain B-3501A) (Filobasidiella neoformans) protein is Serine/threonine-protein phosphatase 2A activator 1 (RRD1).